The primary structure comprises 202 residues: Dephospho-CoA kinase (202 aa).

Positions 3–200 constitute a DPCK domain; sequence TIGLTGGIGS…QRYLTLAANR (198 aa). 11–16 is a binding site for ATP; sequence GSGKSA.

Belongs to the CoaE family.

It localises to the cytoplasm. It catalyses the reaction 3'-dephospho-CoA + ATP = ADP + CoA + H(+). It functions in the pathway cofactor biosynthesis; coenzyme A biosynthesis; CoA from (R)-pantothenate: step 5/5. Catalyzes the phosphorylation of the 3'-hydroxyl group of dephosphocoenzyme A to form coenzyme A. This Thiobacillus denitrificans (strain ATCC 25259 / T1) protein is Dephospho-CoA kinase.